Reading from the N-terminus, the 183-residue chain is Bifunctional protein PyrR (183 aa).

The short motif at 100–112 (VILVDDVLYTGRT) is the PRPP-binding element.

This sequence belongs to the purine/pyrimidine phosphoribosyltransferase family. PyrR subfamily.

The catalysed reaction is UMP + diphosphate = 5-phospho-alpha-D-ribose 1-diphosphate + uracil. In terms of biological role, regulates the transcription of the pyrimidine nucleotide (pyr) operon in response to exogenous pyrimidines. Also displays a weak uracil phosphoribosyltransferase activity which is not physiologically significant. The chain is Bifunctional protein PyrR from Deinococcus deserti (strain DSM 17065 / CIP 109153 / LMG 22923 / VCD115).